We begin with the raw amino-acid sequence, 214 residues long: N-(5'-phosphoribosyl)anthranilate isomerase (214 aa).

It belongs to the TrpF family.

It carries out the reaction N-(5-phospho-beta-D-ribosyl)anthranilate = 1-(2-carboxyphenylamino)-1-deoxy-D-ribulose 5-phosphate. The protein operates within amino-acid biosynthesis; L-tryptophan biosynthesis; L-tryptophan from chorismate: step 3/5. In Haloarcula marismortui (strain ATCC 43049 / DSM 3752 / JCM 8966 / VKM B-1809) (Halobacterium marismortui), this protein is N-(5'-phosphoribosyl)anthranilate isomerase.